The chain runs to 453 residues: MKRVVLTGTGSGVGKTTIATGIMKALSDEHKIQPFKVGPDYIDPSYHNCATGVSSRNLDSFFMSDGQIRQSFKNGMTSSHADYGIIEGVRGLYEGISPTNDIGSTSSIAKALNSPVILIINSRSLVRSAAAMTLGFKALDSRIDIEGVILNNVKSQKHYLKTKEAVEKLANTRVLGGIERDNSISMEQRHLGLIPAVEQERISGLVEKWGELIRENIDLDALMEIMDNSNPIINEYEPIWSPNKTKHKTRIAVPFDEAFNFYYKENLEALEYNNAKIEYFSPIHDEQLPSVDALYIGGGYPEIFKKELSKNTTMLESIKEFSQDNHPIYAECGGLMYLCKTIDSLPMVDVFPYHSMLTKRVQGLSYTIAHVQRDNPILKKNTTYHGHEFHYSKVEYTGSNSNDFAFSMRRGVGITGKYDGLLKNNTLASYIHTHTACLPDFGYNFTQSAYENK.

A GATase cobBQ-type domain is found at 250 to 440 (RIAVPFDEAF…IHTHTACLPD (191 aa)). Cysteine 332 serves as the catalytic Nucleophile.

Belongs to the CobB/CbiA family. The cofactor is Mg(2+).

The enzyme catalyses cob(II)yrinate + 2 L-glutamine + 2 ATP + 2 H2O = cob(II)yrinate a,c diamide + 2 L-glutamate + 2 ADP + 2 phosphate + 2 H(+). It catalyses the reaction Ni-sirohydrochlorin + 2 L-glutamine + 2 ATP + 2 H2O = Ni-sirohydrochlorin a,c-diamide + 2 L-glutamate + 2 ADP + 2 phosphate + 2 H(+). It functions in the pathway cofactor biosynthesis; adenosylcobalamin biosynthesis; cob(II)yrinate a,c-diamide from sirohydrochlorin (anaerobic route): step 10/10. Functionally, catalyzes the ATP-dependent amidation of the two carboxylate groups at positions a and c of cobyrinate, using either L-glutamine or ammonia as the nitrogen source. Involved in the biosynthesis of the unique nickel-containing tetrapyrrole coenzyme F430, the prosthetic group of methyl-coenzyme M reductase (MCR), which plays a key role in methanogenesis and anaerobic methane oxidation. Catalyzes the ATP-dependent amidation of the two carboxylate groups at positions a and c of Ni-sirohydrochlorin, using L-glutamine or ammonia as the nitrogen source. The protein is Cobyrinate a,c-diamide synthase of Methanosphaera stadtmanae (strain ATCC 43021 / DSM 3091 / JCM 11832 / MCB-3).